The chain runs to 678 residues: Glutamate--cysteine ligase (678 aa).

Belongs to the glutamate--cysteine ligase type 3 family.

The catalysed reaction is L-cysteine + L-glutamate + ATP = gamma-L-glutamyl-L-cysteine + ADP + phosphate + H(+). Its pathway is sulfur metabolism; glutathione biosynthesis; glutathione from L-cysteine and L-glutamate: step 1/2. Its activity is regulated as follows. Feedback inhibition by glutathione. Catalyzes the ATP-dependent condensation of cysteine and glutamate to form the dipeptide gamma-glutamylcysteine (gamma-GC), the first and rate-limiting step in the production of glutathione (GSH). This is Glutamate--cysteine ligase (GSH1) from Saccharomyces cerevisiae (strain ATCC 204508 / S288c) (Baker's yeast).